We begin with the raw amino-acid sequence, 380 residues long: 3-dehydroquinate synthase (380 aa).

Residues Gly-118–Asp-122, Thr-142–Ser-143, Lys-155, and Lys-164 contribute to the NAD(+) site. Positions 197, 259, and 278 each coordinate Zn(2+).

The protein belongs to the sugar phosphate cyclases superfamily. Dehydroquinate synthase family. The cofactor is Co(2+). It depends on Zn(2+) as a cofactor. Requires NAD(+) as cofactor.

The protein localises to the cytoplasm. It carries out the reaction 7-phospho-2-dehydro-3-deoxy-D-arabino-heptonate = 3-dehydroquinate + phosphate. It participates in metabolic intermediate biosynthesis; chorismate biosynthesis; chorismate from D-erythrose 4-phosphate and phosphoenolpyruvate: step 2/7. In terms of biological role, catalyzes the conversion of 3-deoxy-D-arabino-heptulosonate 7-phosphate (DAHP) to dehydroquinate (DHQ). The chain is 3-dehydroquinate synthase from Sinorhizobium medicae (strain WSM419) (Ensifer medicae).